A 74-amino-acid polypeptide reads, in one-letter code: MRTTIDLDDDILRALKRRQREERKTLGQLASELLAQALAAEPPPNVDIRWSTADLRPRVDLDDKDAVWAILDRG.

Functionally, possibly the antitoxin component of a type II toxin-antitoxin (TA) system. Its cognate toxin is VapC48 (Potential). In Mycobacterium tuberculosis (strain CDC 1551 / Oshkosh), this protein is Putative antitoxin VapB48 (vapB48).